A 996-amino-acid chain; its full sequence is Alanine--tRNA ligase, chloroplastic/mitochondrial (996 aa).

Residues histidine 677, histidine 681, cysteine 779, and histidine 783 each contribute to the Zn(2+) site.

This sequence belongs to the class-II aminoacyl-tRNA synthetase family. In terms of assembly, monomer. The cofactor is Zn(2+).

The protein localises to the plastid. The protein resides in the chloroplast. It localises to the mitochondrion. The enzyme catalyses tRNA(Ala) + L-alanine + ATP = L-alanyl-tRNA(Ala) + AMP + diphosphate. Its function is as follows. Catalyzes the attachment of alanine to tRNA(Ala) in a two-step reaction: alanine is first activated by ATP to form Ala-AMP and then transferred to the acceptor end of tRNA(Ala). Also edits incorrectly charged tRNA(Ala) via its editing domain. The sequence is that of Alanine--tRNA ligase, chloroplastic/mitochondrial from Oryza sativa subsp. japonica (Rice).